Here is a 406-residue protein sequence, read N- to C-terminus: Kelch domain-containing protein 1 (406 aa).

Kelch repeat units lie at residues 24–76 (FLYV…CGAC), 80–134 (KLYI…VYKD), 135–181 (RLIY…TKTQ), 208–258 (KGYI…PIAD), 260–307 (KLFL…ACLG), and 311–361 (EIMV…LESQ).

As to quaternary structure, component of a CRL5 E3 ubiquitin-protein ligase complex, also named ECS (Elongin BC-CUL2/5-SOCS-box protein) complex, composed of CUL5, Elongin BC (ELOB and ELOC), RBX1 and substrate-specific adapter KLHDC1. In terms of tissue distribution, widely expressed, with high levels in skeletal muscle, pancreas and liver. Undetectable in peripheral blood leukocytes.

Its subcellular location is the cytoplasm. It is found in the cytosol. The protein operates within protein modification; protein ubiquitination. In terms of biological role, substrate-recognition component of a Cul5-RING (CRL5) E3 ubiquitin-protein ligase complex of the DesCEND (destruction via C-end degrons) pathway, which recognizes a C-degron located at the extreme C terminus of target proteins, leading to their ubiquitination and degradation. The C-degron recognized by the DesCEND pathway is usually a motif of less than ten residues and can be present in full-length proteins, truncated proteins or proteolytically cleaved forms. The CRL5(KLHDC1) complex mediates ubiquitination and degradation of truncated SELENOS selenoprotein produced by failed UGA/Sec decoding, which ends with a glycine. In Homo sapiens (Human), this protein is Kelch domain-containing protein 1.